A 275-amino-acid chain; its full sequence is MKRSTPRPARSQAALTTSSEESPDRVERGGDGVATVTDFPDGPPDETGLTPRQRRILDVIRDSVRRRGYPPSMREIGEAVGLTSTSSVAHQLMVLQRKGFLRRDPNRPRAVEIRSAESAVPDASAGHSPAADRAPSARRPPRGPSPIDSNPDVVAVPLVGRIAAGGPALAEQLIEDVVPLPRQLVGEGTLFLLQVKGDSMVDAAICDGDWVVVRQQPVAENGDIVAAMIDGEATVKTFKRRGAHIWLMPHNPQYEPIPGDEATILGRVVAVLRRL.

Residues 1–50 form a disordered region; it reads MKRSTPRPARSQAALTTSSEESPDRVERGGDGVATVTDFPDGPPDETGLT. Residues 73–93 constitute a DNA-binding region (H-T-H motif); it reads MREIGEAVGLTSTSSVAHQLM. The disordered stretch occupies residues 114 to 151; it reads RSAESAVPDASAGHSPAADRAPSARRPPRGPSPIDSNP. Catalysis depends on for autocatalytic cleavage activity residues serine 199 and lysine 236.

It belongs to the peptidase S24 family. In terms of assembly, homodimer.

The catalysed reaction is Hydrolysis of Ala-|-Gly bond in repressor LexA.. In terms of biological role, represses a number of genes involved in the response to DNA damage (SOS response), including recA and lexA. In the presence of single-stranded DNA, RecA interacts with LexA causing an autocatalytic cleavage which disrupts the DNA-binding part of LexA, leading to derepression of the SOS regulon and eventually DNA repair. The chain is LexA repressor from Acidothermus cellulolyticus (strain ATCC 43068 / DSM 8971 / 11B).